We begin with the raw amino-acid sequence, 483 residues long: Replication factor C large subunit (483 aa).

43–50 (GKPGIGKT) is an ATP binding site. Residues 417–442 (ELKKKKKEEDAKGKKARGSKKEKEPI) show a composition bias toward basic and acidic residues. A disordered region spans residues 417 to 483 (ELKKKKKEED…KSSQSTLFSF (67 aa)). The span at 448 to 457 (SIDSFSSQEP) shows a compositional bias: polar residues.

Belongs to the activator 1 small subunits family. RfcL subfamily. In terms of assembly, heteromultimer composed of small subunits (RfcS) and large subunits (RfcL).

Functionally, part of the RFC clamp loader complex which loads the PCNA sliding clamp onto DNA. This chain is Replication factor C large subunit, found in Methanospirillum hungatei JF-1 (strain ATCC 27890 / DSM 864 / NBRC 100397 / JF-1).